The primary structure comprises 103 residues: Small ribosomal subunit protein bS6c (103 aa).

It belongs to the bacterial ribosomal protein bS6 family.

It is found in the plastid. The protein localises to the chloroplast. In terms of biological role, binds together with bS18 to 16S ribosomal RNA. The protein is Small ribosomal subunit protein bS6c of Gracilaria tenuistipitata var. liui (Red alga).